Reading from the N-terminus, the 1325-residue chain is ATP-binding cassette sub-family C member 4 (1325 aa).

An ABC transmembrane type-1 1 domain is found at 92-377 (YLVLGIFTLI…FFPSAIERVS (286 aa)). 7 helical membrane-spanning segments follow: residues 93–113 (LVLG…PIFL), 136–156 (AYAT…HLYF), 207–227 (QVTV…AVTA), 228–248 (LLWM…IILL), 328–348 (SKII…VITA), 351–371 (VFVA…FFPS), and 440–460 (LLAV…AVLG). The ABC transporter 1 domain maps to 410–633 (VHVQDFTAFW…GIDFGSLLKK (224 aa)). 445 to 452 (GPVGAGKS) serves as a coordination point for ATP. 2 positions are modified to phosphothreonine: Thr-646 and Thr-648. A compositionally biased stretch (low complexity) spans 657-667 (SSVWSQQSSRP). A disordered region spans residues 657–688 (SSVWSQQSSRPSLKDGALESQDTENVPVTLSE). A phosphoserine mark is found at Ser-664 and Ser-668. The helical transmembrane segment at 710 to 730 (HWIVFIFLILLNTAAQVAYVL) threads the bilayer. The ABC transmembrane type-1 2 domain occupies 714–1005 (FIFLILLNTA…CVRQSAEVEN (292 aa)). Residues Asn-746 and Asn-754 are each glycosylated (N-linked (GlcNAc...) asparagine). 6 helical membrane passes run 771–791 (LTVA…YVLV), 836–856 (LPLT…VVSV), 858–878 (VAVI…FIFL), 954–974 (AICA…AKTL), 977–997 (GQVG…QWCV), and 1038–1058 (EGVI…PLVL). One can recognise an ABC transporter 2 domain in the interval 1041–1274 (IIFDNVNFMY…KESLFYKMVQ (234 aa)). 1075–1082 (GRTGAGKS) is an ATP binding site. The PDZ-binding motif lies at 1322 to 1325 (ETAL).

It belongs to the ABC transporter superfamily. ABCC family. Conjugate transporter (TC 3.A.1.208) subfamily. Interacts (via PDZ-binding motif) with SNX27 (via PDZ domain); this interaction accelerates MRP4 internalization. Mg(2+) serves as cofactor. In terms of processing, N-glycosylated; leading to substrate-selective effects on its transport activity. In terms of tissue distribution, widely expressed, with particularly high levels in prostate, but is barely detectable in liver. sinusoidal membrane of hepatocytes.

The protein localises to the basolateral cell membrane. It localises to the apical cell membrane. It carries out the reaction ATP + H2O + xenobioticSide 1 = ADP + phosphate + xenobioticSide 2.. It catalyses the reaction an S-substituted glutathione(in) + ATP + H2O = an S-substituted glutathione(out) + ADP + phosphate + H(+). The catalysed reaction is 17beta-estradiol 17-O-(beta-D-glucuronate)(in) + ATP + H2O = 17beta-estradiol 17-O-(beta-D-glucuronate)(out) + ADP + phosphate + H(+). The enzyme catalyses dehydroepiandrosterone 3-sulfate(in) + ATP + H2O = dehydroepiandrosterone 3-sulfate(out) + ADP + phosphate + H(+). It carries out the reaction leukotriene C4(in) + ATP + H2O = leukotriene C4(out) + ADP + phosphate + H(+). It catalyses the reaction leukotriene B4(in) + ATP + H2O = leukotriene B4(out) + ADP + phosphate + H(+). The catalysed reaction is urate(in) + ATP + H2O = urate(out) + ADP + phosphate + H(+). The enzyme catalyses 3',5'-cyclic GMP(in) + ATP + H2O = 3',5'-cyclic GMP(out) + ADP + phosphate + H(+). It carries out the reaction 3',5'-cyclic AMP(in) + ATP + H2O = 3',5'-cyclic AMP(out) + ADP + phosphate + H(+). It catalyses the reaction prostaglandin E2(in) + ATP + H2O = prostaglandin E2(out) + ADP + phosphate + H(+). The catalysed reaction is prostaglandin E1(in) + ATP + H2O = prostaglandin E1(out) + ADP + phosphate + H(+). The enzyme catalyses glycodeoxycholate(in) + glutathione(in) + ATP + H2O = glycodeoxycholate(out) + glutathione(out) + ADP + phosphate + H(+). It carries out the reaction cholate(in) + glutathione(in) + ATP + H2O = cholate(out) + glutathione(out) + ADP + phosphate + H(+). It catalyses the reaction glycocholate(in) + glutathione(in) + ATP + H2O = glycocholate(out) + glutathione(out) + ADP + phosphate + H(+). The catalysed reaction is taurocholate(in) + glutathione(in) + ATP + H2O = taurocholate(out) + glutathione(out) + ADP + phosphate + H(+). The enzyme catalyses glycochenodeoxycholate(in) + glutathione(in) + ATP + H2O = glycochenodeoxycholate(out) + glutathione(out) + ADP + phosphate + H(+). It carries out the reaction taurochenodeoxycholate(in) + glutathione(in) + ATP + H2O = taurochenodeoxycholate(out) + glutathione(out) + ADP + phosphate + H(+). It catalyses the reaction glycoursodeoxycholate(in) + glutathione(in) + ATP + H2O = glycoursodeoxycholate(out) + glutathione(out) + ADP + phosphate + H(+). The catalysed reaction is tauroursodeoxycholate(in) + glutathione(in) + ATP + H2O = tauroursodeoxycholate(out) + glutathione(out) + ADP + phosphate + H(+). Its activity is regulated as follows. GSH stimulates the transport of MRP4. Urate inhibits methotrexate transport but stimulates cGMP transport. Nonsteroidal anti-inflammatory drugs (NSAIDs) strongly suppress the transport of MRP4 substrates. Its function is as follows. ATP-dependent transporter of the ATP-binding cassette (ABC) family that actively extrudes physiological compounds and xenobiotics from cells. Transports a range of endogenous molecules that have a key role in cellular communication and signaling, including cyclic nucleotides such as cyclic AMP (cAMP) and cyclic GMP (cGMP), bile acids, steroid conjugates, urate, and prostaglandins. Mediates the ATP-dependent efflux of glutathione conjugates such as leukotriene C4 (LTC4) and leukotriene B4 (LTB4) too. The presence of GSH is necessary for the ATP-dependent transport of LTB4, whereas GSH is not required for the transport of LTC4. Mediates the cotransport of bile acids with reduced glutathione (GSH). Transports a wide range of drugs and their metabolites, including anticancer, antiviral and antibiotics molecules. Confers resistance to anticancer agents such as methotrexate. The polypeptide is ATP-binding cassette sub-family C member 4 (ABCC4) (Homo sapiens (Human)).